We begin with the raw amino-acid sequence, 381 residues long: Queuine tRNA-ribosyltransferase (381 aa).

D92 functions as the Proton acceptor in the catalytic mechanism. Residues 92–96 (DSGGF), D146, Q190, and G217 each bind substrate. Residues 248-254 (GVGRPED) are RNA binding. Catalysis depends on D267, which acts as the Nucleophile. The tract at residues 272 to 276 (TRNAR) is RNA binding; important for wobble base 34 recognition. Zn(2+) is bound by residues C305, C307, C310, and H337.

Belongs to the queuine tRNA-ribosyltransferase family. As to quaternary structure, homodimer. Within each dimer, one monomer is responsible for RNA recognition and catalysis, while the other monomer binds to the replacement base PreQ1. Zn(2+) serves as cofactor.

It catalyses the reaction 7-aminomethyl-7-carbaguanine + guanosine(34) in tRNA = 7-aminomethyl-7-carbaguanosine(34) in tRNA + guanine. Its pathway is tRNA modification; tRNA-queuosine biosynthesis. Catalyzes the base-exchange of a guanine (G) residue with the queuine precursor 7-aminomethyl-7-deazaguanine (PreQ1) at position 34 (anticodon wobble position) in tRNAs with GU(N) anticodons (tRNA-Asp, -Asn, -His and -Tyr). Catalysis occurs through a double-displacement mechanism. The nucleophile active site attacks the C1' of nucleotide 34 to detach the guanine base from the RNA, forming a covalent enzyme-RNA intermediate. The proton acceptor active site deprotonates the incoming PreQ1, allowing a nucleophilic attack on the C1' of the ribose to form the product. After dissociation, two additional enzymatic reactions on the tRNA convert PreQ1 to queuine (Q), resulting in the hypermodified nucleoside queuosine (7-(((4,5-cis-dihydroxy-2-cyclopenten-1-yl)amino)methyl)-7-deazaguanosine). The polypeptide is Queuine tRNA-ribosyltransferase (Xanthomonas euvesicatoria pv. vesicatoria (strain 85-10) (Xanthomonas campestris pv. vesicatoria)).